Consider the following 449-residue polypeptide: Phosphoglucosamine mutase (449 aa).

Ser101 functions as the Phosphoserine intermediate in the catalytic mechanism. Ser101, Asp243, Asp245, and Asp247 together coordinate Mg(2+). Ser101 is modified (phosphoserine).

Belongs to the phosphohexose mutase family. The cofactor is Mg(2+). Activated by phosphorylation.

The enzyme catalyses alpha-D-glucosamine 1-phosphate = D-glucosamine 6-phosphate. Functionally, catalyzes the conversion of glucosamine-6-phosphate to glucosamine-1-phosphate. This is Phosphoglucosamine mutase from Syntrophus aciditrophicus (strain SB).